The primary structure comprises 221 residues: ATP-dependent dethiobiotin synthetase BioD (221 aa).

ATP is bound at residue 11-16; sequence GVGKTY. Residue Thr-15 participates in Mg(2+) binding. Lys-36 is a catalytic residue. A substrate-binding site is contributed by Thr-40. ATP-binding positions include Asp-48 and 107–110; that span reads EGAG. Mg(2+) is bound by residues Asp-48 and Glu-107.

It belongs to the dethiobiotin synthetase family. As to quaternary structure, homodimer. Mg(2+) serves as cofactor.

Its subcellular location is the cytoplasm. The catalysed reaction is (7R,8S)-7,8-diammoniononanoate + CO2 + ATP = (4R,5S)-dethiobiotin + ADP + phosphate + 3 H(+). Its pathway is cofactor biosynthesis; biotin biosynthesis; biotin from 7,8-diaminononanoate: step 1/2. Its function is as follows. Catalyzes a mechanistically unusual reaction, the ATP-dependent insertion of CO2 between the N7 and N8 nitrogen atoms of 7,8-diaminopelargonic acid (DAPA, also called 7,8-diammoniononanoate) to form a ureido ring. In Hydrogenobaculum sp. (strain Y04AAS1), this protein is ATP-dependent dethiobiotin synthetase BioD.